We begin with the raw amino-acid sequence, 120 residues long: Cytochrome c-550 (120 aa).

Residues 5–25 traverse the membrane as a helical segment; that stretch reads PLIPFLLIAVLGIGLTFFLSV. At 26–120 the chain is on the periplasmic side; sequence KGLDDSREIA…DMAEWVSKIK (95 aa). Heme c-binding residues include Cys-60, Cys-63, His-64, and Met-99.

Post-translationally, binds 1 heme c group covalently per subunit.

It is found in the cell membrane. Not essential for growth on minimal or rich media. The protein is Cytochrome c-550 (cccA) of Bacillus subtilis (strain 168).